A 1226-amino-acid chain; its full sequence is Cytosolic carboxypeptidase 1 (1226 aa).

Residues 599 to 619 are disordered; it reads TEDDEDTESNSSVEQASVEVP. A Peptidase M14 domain is found at 848–1138; the sequence is YPYTYSTLQM…KFCVGLLRLK (291 aa). Residues His920, Glu923, and His1017 each coordinate Zn(2+). Residue Glu1102 is the Proton donor/acceptor of the active site. A Phosphoserine modification is found at Ser1168. A disordered region spans residues 1206–1226; it reads YEPSAQEEVLSDSELSRTYLP.

This sequence belongs to the peptidase M14 family. In terms of assembly, interacts with MYLK. Zn(2+) is required as a cofactor.

It localises to the cytoplasm. The protein resides in the cytosol. It is found in the nucleus. Its subcellular location is the mitochondrion. The catalysed reaction is (L-glutamyl)(n+1)-gamma-L-glutamyl-L-glutamyl-[protein] + H2O = (L-glutamyl)(n)-gamma-L-glutamyl-L-glutamyl-[protein] + L-glutamate. It catalyses the reaction C-terminal L-alpha-aminoacyl-L-glutamyl-L-glutamyl-[tubulin] + H2O = C-terminal L-alpha-aminoacyl-L-glutamyl-[tubulin] + L-glutamate. Metallocarboxypeptidase that mediates protein deglutamylation of tubulin and non-tubulin target proteins. Catalyzes the removal of polyglutamate side chains present on the gamma-carboxyl group of glutamate residues within the C-terminal tail of alpha- and beta-tubulin. Specifically cleaves tubulin long-side-chains, while it is not able to remove the branching point glutamate. Also catalyzes the removal of polyglutamate residues from the carboxy-terminus of alpha-tubulin as well as non-tubulin proteins such as MYLK. Involved in KLF4 deglutamylation which promotes KLF4 proteasome-mediated degradation, thereby negatively regulating cell pluripotency maintenance and embryogenesis. This Homo sapiens (Human) protein is Cytosolic carboxypeptidase 1.